A 120-amino-acid chain; its full sequence is NAD(P)H-quinone oxidoreductase subunit 3, chloroplastic (120 aa).

Helical transmembrane passes span 9-29 (IFWT…WISG), 64-84 (MFAL…PWAM), and 88-108 (VLGV…VVGL).

This sequence belongs to the complex I subunit 3 family. In terms of assembly, NDH is composed of at least 16 different subunits, 5 of which are encoded in the nucleus.

The protein localises to the plastid. Its subcellular location is the chloroplast thylakoid membrane. The catalysed reaction is a plastoquinone + NADH + (n+1) H(+)(in) = a plastoquinol + NAD(+) + n H(+)(out). It carries out the reaction a plastoquinone + NADPH + (n+1) H(+)(in) = a plastoquinol + NADP(+) + n H(+)(out). Its function is as follows. NDH shuttles electrons from NAD(P)H:plastoquinone, via FMN and iron-sulfur (Fe-S) centers, to quinones in the photosynthetic chain and possibly in a chloroplast respiratory chain. The immediate electron acceptor for the enzyme in this species is believed to be plastoquinone. Couples the redox reaction to proton translocation, and thus conserves the redox energy in a proton gradient. In Lolium perenne (Perennial ryegrass), this protein is NAD(P)H-quinone oxidoreductase subunit 3, chloroplastic.